The chain runs to 131 residues: Global transcriptional regulator Spx 2 (131 aa).

C10 and C13 are disulfide-bonded.

This sequence belongs to the ArsC family. Spx subfamily. In terms of assembly, interacts with the C-terminal domain of the alpha subunit of the RNAP.

It is found in the cytoplasm. Functionally, global transcriptional regulator that plays a key role in stress response and exerts either positive or negative regulation of genes. Acts by interacting with the C-terminal domain of the alpha subunit of the RNA polymerase (RNAP). This interaction can enhance binding of RNAP to the promoter region of target genes and stimulate their transcription, or block interaction of RNAP with activator. The sequence is that of Global transcriptional regulator Spx 2 from Bacillus anthracis.